A 167-amino-acid chain; its full sequence is Leptin (167 aa).

The signal sequence occupies residues methionine 1–alanine 21. The cysteines at positions 117 and 167 are disulfide-linked.

This sequence belongs to the leptin family.

The protein resides in the secreted. Its function is as follows. Key player in the regulation of energy balance and body weight control. Once released into the circulation, has central and peripheral effects by binding LEPR, found in many tissues, which results in the activation of several major signaling pathways. In the hypothalamus, acts as an appetite-regulating factor that induces a decrease in food intake and an increase in energy consumption by inducing anorexinogenic factors and suppressing orexigenic neuropeptides, also regulates bone mass and secretion of hypothalamo-pituitary-adrenal hormones. In the periphery, increases basal metabolism, influences reproductive function, regulates pancreatic beta-cell function and insulin secretion, is pro-angiogenic for endothelial cell and affects innate and adaptive immunity. In the arcuate nucleus of the hypothalamus, activates by depolarization POMC neurons inducing FOS and SOCS3 expression to release anorexigenic peptides and inhibits by hyperpolarization NPY neurons inducing SOCS3 with a consequent reduction on release of orexigenic peptides. In addition to its known satiety inducing effect, has a modulatory role in nutrient absorption. In the intestine, reduces glucose absorption by enterocytes by activating PKC and leading to a sequential activation of p38, PI3K and ERK signaling pathways which exerts an inhibitory effect on glucose absorption. Acts as a growth factor on certain tissues, through the activation of different signaling pathways increases expression of genes involved in cell cycle regulation such as CCND1, via JAK2-STAT3 pathway, or VEGFA, via MAPK1/3 and PI3K-AKT1 pathways. May also play an apoptotic role via JAK2-STAT3 pathway and up-regulation of BIRC5 expression. Pro-angiogenic, has mitogenic activity on vascular endothelial cells and plays a role in matrix remodeling by regulating the expression of matrix metalloproteinases (MMPs) and tissue inhibitors of metalloproteinases (TIMPs). In innate immunity, modulates the activity and function of neutrophils by increasing chemotaxis and the secretion of oxygen radicals. Increases phagocytosis by macrophages and enhances secretion of pro-inflammatory mediators. Increases cytotoxic ability of NK cells. Plays a pro-inflammatory role, in synergy with IL1B, by inducing NOS2 which promotes the production of IL6, IL8 and Prostaglandin E2, through a signaling pathway that involves JAK2, PI3K, MAP2K1/MEK1 and MAPK14/p38. In adaptive immunity, promotes the switch of memory T-cells towards T helper-1 cell immune responses. Increases CD4(+)CD25(-) T-cell proliferation and reduces autophagy during TCR (T-cell receptor) stimulation, through MTOR signaling pathway activation and BCL2 up-regulation. In Macaca mulatta (Rhesus macaque), this protein is Leptin (LEP).